Consider the following 230-residue polypeptide: UPF0688 protein C1orf174 homolog (230 aa).

Disordered regions lie at residues 1 to 85 (MRSR…SLPK) and 97 to 166 (AEDS…VRAS). Residues 11–30 (RSSARLRARSYSSASLASAR) show a composition bias toward low complexity. The segment covering 31-48 (DVTSSTSAKTTCLASSSH) has biased composition (polar residues). The span at 49-78 (KATDRRTSKKFKYDKGHLVKAELQKLDPKS) shows a compositional bias: basic and acidic residues. Ser180 is subject to Phosphoserine.

Belongs to the UPF0688 family.

The protein localises to the nucleus. The sequence is that of UPF0688 protein C1orf174 homolog from Mus musculus (Mouse).